Consider the following 289-residue polypeptide: Elongation factor Ts (289 aa).

Residues 82-85 (TDFV) form an involved in Mg(2+) ion dislocation from EF-Tu region.

Belongs to the EF-Ts family.

It localises to the cytoplasm. Associates with the EF-Tu.GDP complex and induces the exchange of GDP to GTP. It remains bound to the aminoacyl-tRNA.EF-Tu.GTP complex up to the GTP hydrolysis stage on the ribosome. In Chloroherpeton thalassium (strain ATCC 35110 / GB-78), this protein is Elongation factor Ts.